A 186-amino-acid polypeptide reads, in one-letter code: Spermidine N(1)-acetyltransferase (186 aa).

One can recognise an N-acetyltransferase domain in the interval 7–167; that stretch reads VKLRPLERED…NAIRMCIFQH (161 aa). Spermine-binding positions include Met-30, Glu-35, Glu-43, and 51 to 54; that span reads HIHD. Glu-35 contacts Mg(2+). 2 residues coordinate spermidine: Glu-35 and Glu-43. Glu-76 contacts Mg(2+). 85–87 provides a ligand contact to spermine; that stretch reads EFQ. Acetyl-CoA contacts are provided by residues 88-90, 95-101, and 128-137; these read III, QGKGLAT, and NEKAIHIYRK. The active-site Proton donor is the Tyr-135.

The protein belongs to the acetyltransferase family. In terms of assembly, homododecamer.

It is found in the cytoplasm. It catalyses the reaction an alkane-alpha,omega-diamine + acetyl-CoA = an N-acetylalkane-alpha,omega-diamine + CoA + H(+). The enzyme catalyses spermidine + acetyl-CoA = N(1)-acetylspermidine + CoA + H(+). The catalysed reaction is spermidine + acetyl-CoA = N(8)-acetylspermidine + CoA + H(+). It carries out the reaction spermine + acetyl-CoA = N(1)-acetylspermine + CoA + H(+). Its pathway is amine and polyamine degradation; spermidine degradation. The protein operates within amine and polyamine degradation; spermine degradation. Its function is as follows. Involved in the protection against polyamine toxicity by regulating their concentration. Catalyzes the transfer of an acetyl group from acetyl coenzyme A (AcCoA) to the primary amino groups of spermidine to yield N(1)- and N(8)-acetylspermidine. It can also use spermine. This chain is Spermidine N(1)-acetyltransferase (speG), found in Escherichia coli O157:H7.